The following is a 196-amino-acid chain: dITP/XTP pyrophosphatase (196 aa).

Residue 10 to 15 (TSNKGK) coordinates substrate. The Proton acceptor role is filled by D71. Residue D71 coordinates Mg(2+). Residues S72, 156-159 (FGYD), K179, and 184-185 (HR) each bind substrate.

It belongs to the HAM1 NTPase family. In terms of assembly, homodimer. Mg(2+) is required as a cofactor.

It catalyses the reaction XTP + H2O = XMP + diphosphate + H(+). The catalysed reaction is dITP + H2O = dIMP + diphosphate + H(+). The enzyme catalyses ITP + H2O = IMP + diphosphate + H(+). In terms of biological role, pyrophosphatase that catalyzes the hydrolysis of nucleoside triphosphates to their monophosphate derivatives, with a high preference for the non-canonical purine nucleotides XTP (xanthosine triphosphate), dITP (deoxyinosine triphosphate) and ITP. Seems to function as a house-cleaning enzyme that removes non-canonical purine nucleotides from the nucleotide pool, thus preventing their incorporation into DNA/RNA and avoiding chromosomal lesions. This Haemophilus ducreyi (strain 35000HP / ATCC 700724) protein is dITP/XTP pyrophosphatase.